We begin with the raw amino-acid sequence, 316 residues long: NAC domain-containing protein 22 (316 aa).

In terms of domain architecture, NAC spans 17 to 170; the sequence is DLPGFRFHPT…DMVLCKIYRK (154 aa). A DNA-binding region spans residues 117–176; that stretch reads IGLKKTLVFYQGRAPRGTKTDWVMNEYRLPDYGAARAAAPPPKEDMVLCKIYRKATPLKE. The disordered stretch occupies residues 229–260; that stretch reads QSSSSSAAPSGSSSKNGGAGAPREAKKEEADV. Positions 230–244 are enriched in low complexity; it reads SSSSSAAPSGSSSKN.

It is found in the nucleus. Transcription activator that binds sequence-specific DNA motifs. Involved in stress response. Plays a positive role in drought and salt stress tolerance through the modulation of abscisic acid-mediated signaling. The polypeptide is NAC domain-containing protein 22 (Oryza sativa subsp. japonica (Rice)).